The primary structure comprises 612 residues: Citryl-spermidine/3,4-dihydroxybenzoyl-citryl-spermidine:spermidine ligase (612 aa).

ATP is bound by residues 282 to 284, Lys298, Arg310, Tyr390, and Glu461; that span reads SMR.

The protein belongs to the IucA/IucC family. In terms of assembly, homodimer.

It catalyses the reaction N(8)-citryl-spermidine + spermidine + ATP = N(8),N'(8)-citryl-bis(spermidine) + AMP + diphosphate + H(+). The enzyme catalyses N(1)-(3,4-dihydroxybenzoyl)-N(8)-citryl-spermidine + spermidine + ATP = N(1)-(3,4-dihydroxybenzoyl)-N(8),N'(8)-citryl-bis(spermidine) + AMP + diphosphate + H(+). Its pathway is siderophore biosynthesis; petrobactin biosynthesis. Functionally, involved in the biosynthesis of petrobactin, a catecholate siderophore that functions in both iron acquisition and virulence. Catalyzes the ATP-dependent condensation of spermidine with N(8)-citryl-spermidine or N(1)-(3,4-dihydroxbenzoyl)-N(8)-citryl-spermidine, two intermediates in petrobactin biosynthesis pathway. The chain is Citryl-spermidine/3,4-dihydroxybenzoyl-citryl-spermidine:spermidine ligase from Bacillus anthracis.